A 187-amino-acid chain; its full sequence is Choriogonadotropin subunit beta variant 1 (187 aa).

The signal sequence occupies residues 1–50 (MSTFPVLAEDIPLRERHVKGRVDPHFRAPKMEMFQRLLLLLLLSMGGTWA). Disulfide bonds link cysteine 59–cysteine 107, cysteine 73–cysteine 122, cysteine 76–cysteine 160, cysteine 84–cysteine 138, cysteine 88–cysteine 140, and cysteine 143–cysteine 150. 2 N-linked (GlcNAc...) asparagine glycosylation sites follow: asparagine 63 and asparagine 80. The disordered stretch occupies residues 161–187 (DDPRFQDSSSSKAPPPSLPSPSRLPGP). Residues 173 to 187 (APPPSLPSPSRLPGP) are compositionally biased toward pro residues.

This sequence belongs to the glycoprotein hormones subunit beta family. In terms of tissue distribution, expressed in placenta, testis and pituitary.

It is found in the secreted. The sequence is that of Choriogonadotropin subunit beta variant 1 (CGB1) from Homo sapiens (Human).